The chain runs to 511 residues: Histidine ammonia-lyase (511 aa).

Positions 142–144 (ASG) form a cross-link, 5-imidazolinone (Ala-Gly). Serine 143 is modified (2,3-didehydroalanine (Ser)).

Belongs to the PAL/histidase family. Post-translationally, contains an active site 4-methylidene-imidazol-5-one (MIO), which is formed autocatalytically by cyclization and dehydration of residues Ala-Ser-Gly.

The protein localises to the cytoplasm. The catalysed reaction is L-histidine = trans-urocanate + NH4(+). It participates in amino-acid degradation; L-histidine degradation into L-glutamate; N-formimidoyl-L-glutamate from L-histidine: step 1/3. The chain is Histidine ammonia-lyase from Rhizobium rhizogenes (strain K84 / ATCC BAA-868) (Agrobacterium radiobacter).